Consider the following 141-residue polypeptide: ATP synthase epsilon chain (141 aa).

It belongs to the ATPase epsilon chain family. As to quaternary structure, F-type ATPases have 2 components, CF(1) - the catalytic core - and CF(0) - the membrane proton channel. CF(1) has five subunits: alpha(3), beta(3), gamma(1), delta(1), epsilon(1). CF(0) has three main subunits: a, b and c.

The protein localises to the cell inner membrane. In terms of biological role, produces ATP from ADP in the presence of a proton gradient across the membrane. This is ATP synthase epsilon chain from Burkholderia mallei (strain NCTC 10247).